We begin with the raw amino-acid sequence, 80 residues long: Crustacean hyperglycemic hormones (80 aa).

3 cysteine pairs are disulfide-bonded: Cys-13/Cys-49, Cys-29/Cys-45, and Cys-32/Cys-58. Val-78 carries the post-translational modification Valine amide.

Belongs to the arthropod CHH/MIH/GIH/VIH hormone family. In terms of tissue distribution, produced by the medulla terminalis X-organ in the eyestalks and transported to the sinus gland where they are stored and released.

The protein resides in the secreted. Hormone found in the sinus gland of isopods and decapods which controls the blood sugar level. Has a secretagogue action over the amylase released from the midgut gland. May act as a stress hormone and may be involved in the control of molting and reproduction. This is Crustacean hyperglycemic hormones from Penaeus vannamei (Whiteleg shrimp).